The sequence spans 801 residues: Na(+)/H(+) antiporter subunit A1 (801 aa).

Transmembrane regions (helical) follow at residues 1-21 (MSLL…IPFL), 30-50 (LGWF…SLIS), 79-99 (LGLL…LYSI), 117-137 (LFMG…LYLF), 166-186 (LIIT…LSLA), 206-226 (PFFI…SAQV), 228-250 (FYIW…HSAT), 265-285 (IFAI…ITLF), 300-320 (ILAF…GIGA), 337-357 (FVAA…LFMI), 373-393 (LGGL…TTLS), 427-447 (LGIL…VYSI), 472-492 (ILML…GLFP), 522-542 (GITP…LLLI), 591-611 (LVII…SVPF), 623-643 (VFEG…IFAK), 646-666 (LFSI…FIFF), 671-691 (LALT…LCFY), 707-727 (LTNA…GLIG), and 764-784 (MDTL…YTMI).

It belongs to the CPA3 antiporters (TC 2.A.63) subunit A family. In terms of assembly, may form a heterooligomeric complex that consists of seven subunits: mnhA1, mnhB1, mnhC1, mnhD1, mnhE1, mnhF1 and mnhG1.

The protein resides in the cell membrane. Its function is as follows. Mnh complex is a Na(+)/H(+) antiporter involved in Na(+) excretion. The protein is Na(+)/H(+) antiporter subunit A1 (mnhA1) of Staphylococcus epidermidis (strain ATCC 35984 / DSM 28319 / BCRC 17069 / CCUG 31568 / BM 3577 / RP62A).